A 631-amino-acid chain; its full sequence is Occlusion-derived virus envelope protein E66 (631 aa).

The protein belongs to the baculoviridae E66 family.

Its subcellular location is the virion membrane. In terms of biological role, component of the polyhedra envelope. In Leucania separata nucleopolyhedrovirus (LsNPV), this protein is Occlusion-derived virus envelope protein E66.